The chain runs to 497 residues: MQYIPFLISGLVPVALSKSLFEATSNTRIDGNDIAAIFGPVLTPEAHIFLPSDGDYDDNVMARWSTFNDPSYVATVKPATETDVQAIREYQVSTAASHNITFFATGGGHGVKLNFGNVQNAINIELSLLDFIDLDLDNEVVTIGPGVENAQLYDLLSSVGKETALTGERCVNTIGPTLGGGLGPLYGIRGPQVDSLVSARLVTASGDVITVSRSENRDLFWAIRGAGANFGIVTSATYRIYDQTNGGMAVSAQFAFAPAVNRSVFDLMESMNDEYPPGMSGGMILSYNHTTNEPSVQWNLLFMGSNEDAQPWLDKIQALGPIDSSIRNVPWHRRDEPEVPYCERGQHYILYNLNLRRTDAATLQSYFDSFVDFSSKNPWFDCDLMYERQATDAALAVPLSERGVGPWRDSKINANFLVVTPSEEYDEAADAFVRPFMDRFQAVMGFDTLHVYVNEALGDEGPASWYGEENLPRLVALKQQWDPENKFGAGAPIPLSL.

A signal peptide spans 1-17; sequence MQYIPFLISGLVPVALS. Residues 68 to 243 enclose the FAD-binding PCMH-type domain; it reads NDPSYVATVK…TSATYRIYDQ (176 aa). Asparagine 99, asparagine 261, and asparagine 288 each carry an N-linked (GlcNAc...) asparagine glycan.

The protein belongs to the oxygen-dependent FAD-linked oxidoreductase family.

The protein resides in the secreted. The protein localises to the cell wall. It functions in the pathway alkaloid biosynthesis. In terms of biological role, FAD-linked oxidoreductase; part of the gene cluster that mediates the biosynthesis of the antitumor fumiquinazolines that confer a dual-usage capability to defend against phagocytes in the environment and animal hosts. The simplest member is fumiquinazoline F (FQF) with a 6-6-6 tricyclic core derived from anthranilic acid (Ant), tryptophan (Trp), and alanine (Ala). The trimodular NRPS fmqA is responsible for FQF formation. Modules 1, 2 and 3 of fmqA are predicted to activate and load Ant, Trp and Ala, respectively, providing for the assembly of an Ant-Trp-Ala-S-enzyme intermediate that would undergo double cyclization for chain release and generation of the tricyclic 6-6-6 product fumiquinazoline F. The presence of an E domain predicted for module 2 of fmqA is consistent with epimerization of L-Trp to D-Trp during assembly to generate the R-stereocenter at C14 of FQF. The FAD-dependent monooxygenase fmqB and the monomodular NRPS fmqC then maturate FQF to FQA. FmqB oxidizes the 2',3'-double bond of the indole side chain of FQF, and fmqC activates L-Ala as the adenylate, installs it as the pantetheinyl thioester on its carrier protein domain, and acylates the oxidized indole for subsequent intramolecular cyclization to create the 6-5-5-imidazolindolone of FQA. The FAD-linked oxidoreductase fmqD introduces a third layer of scaffold complexity by converting FQA to the spirohemiaminal FQC, presumably by catalyzing the formation of a transient imine within the pyrazinone ring. FQC subsequently converts nonenzymatically to the known cyclic aminal FQD. The chain is FAD-linked oxidoreductase fmqD from Aspergillus fumigatus (strain ATCC MYA-4609 / CBS 101355 / FGSC A1100 / Af293) (Neosartorya fumigata).